A 319-amino-acid polypeptide reads, in one-letter code: Selection and upkeep of intraepithelial T-cells protein 9 (319 aa).

Residues 1-26 (MESSASCLPGFFMSFLLLQNTVLTQA) form the signal peptide. An Ig-like V-type domain is found at 27-117 (MRSDIKINIQ…TNQEKKRSIV (91 aa)). The Extracellular segment spans residues 27-139 (MRSDIKINIQ…LMSNKFSCPS (113 aa)). A disulfide bridge connects residues C47 and C101. N105 is a glycosylation site (N-linked (GlcNAc...) asparagine). The helical transmembrane segment at 140–160 (IYLITIIFLNFLRGILVFCCL) threads the bilayer. At 161-183 (RRKPVCFRNLMSTVMEALYSKMG) the chain is on the cytoplasmic side. Residues 184–204 (VCCLLIWECLLLVLYIAFLPI) traverse the membrane as a helical segment. Residues 205–228 (YVSFRSRAFLLDDTYPLYTNWLWN) lie on the Extracellular side of the membrane. The helical transmembrane segment at 229-249 (ICIILTVIMVLFPGLILCLLW) threads the bilayer. The Cytoplasmic segment spans residues 250–319 (TLNCYGQVSS…DDTASTLFIS (70 aa)).

It belongs to the SKINT family. In terms of tissue distribution, expressed in skin, thymus and testis.

It localises to the membrane. In terms of biological role, may act by engaging a cell surface molecule on immature T-cells in the embryonic thymus. The polypeptide is Selection and upkeep of intraepithelial T-cells protein 9 (Skint9) (Mus musculus (Mouse)).